A 374-amino-acid polypeptide reads, in one-letter code: MSSNTDPNGMKVVVGMSGGVDSSVTALLLKQQGFDVTGLFMKNWEDDDDDEYCSTRQDLVDVASVCDVIGIDLEVVNFSAEYKDRVFADFLREYEAGRTPNPDVLCNSEIKFRCFLDHAMALGADRIATGHYAQVREWANDGRSEYQLLKAEDGTKDQSYFLYRLNQAQLAKTLFPLGALYKRDVRRIAAEAGLHVAEKKDSTGICFIGERPFREFLMRYLPMRPGEIRNLDDGRVIGEHQGLMYHTIGQRKGLHIGGIKGRQDGAGEHDAWYVAGKDVKANVLYAVQGHEHPALLKTRLSATDLHWIAGRDPHTHWVYTAKPRYRTPDMPCEIEALVDGGAEIVFAEPQWALTPGQSVVVYESKVCLGGGVIA.

Residues 15-22 (GMSGGVDS) and methionine 41 each bind ATP. The segment at 101-103 (NPD) is interaction with target base in tRNA. The active-site Nucleophile is the cysteine 106. The cysteines at positions 106 and 206 are disulfide-linked. An ATP-binding site is contributed by glycine 130. Positions 156 to 158 (KDQ) are interaction with tRNA. The active-site Cysteine persulfide intermediate is the cysteine 206. The segment at 324 to 325 (RY) is interaction with tRNA.

The protein belongs to the MnmA/TRMU family.

It is found in the cytoplasm. It catalyses the reaction S-sulfanyl-L-cysteinyl-[protein] + uridine(34) in tRNA + AH2 + ATP = 2-thiouridine(34) in tRNA + L-cysteinyl-[protein] + A + AMP + diphosphate + H(+). Catalyzes the 2-thiolation of uridine at the wobble position (U34) of tRNA, leading to the formation of s(2)U34. The chain is tRNA-specific 2-thiouridylase MnmA from Aromatoleum aromaticum (strain DSM 19018 / LMG 30748 / EbN1) (Azoarcus sp. (strain EbN1)).